The following is a 326-amino-acid chain: N-acetyl-gamma-glutamyl-phosphate reductase (326 aa).

Residue Cys155 is part of the active site.

The protein belongs to the NAGSA dehydrogenase family. Type 1 subfamily.

Its subcellular location is the cytoplasm. It catalyses the reaction N-acetyl-L-glutamate 5-semialdehyde + phosphate + NADP(+) = N-acetyl-L-glutamyl 5-phosphate + NADPH + H(+). The protein operates within amino-acid biosynthesis; L-arginine biosynthesis; N(2)-acetyl-L-ornithine from L-glutamate: step 3/4. Functionally, catalyzes the NADPH-dependent reduction of N-acetyl-5-glutamyl phosphate to yield N-acetyl-L-glutamate 5-semialdehyde. The chain is N-acetyl-gamma-glutamyl-phosphate reductase from Shewanella oneidensis (strain ATCC 700550 / JCM 31522 / CIP 106686 / LMG 19005 / NCIMB 14063 / MR-1).